Consider the following 32-residue polypeptide: Enolase (32 aa).

Belongs to the enolase family. Homodimer. Mg(2+) is required as a cofactor.

Its subcellular location is the cytoplasm. The enzyme catalyses (2R)-2-phosphoglycerate = phosphoenolpyruvate + H2O. It participates in carbohydrate degradation; glycolysis; pyruvate from D-glyceraldehyde 3-phosphate: step 4/5. This Imperata cylindrica (Cogon grass) protein is Enolase.